We begin with the raw amino-acid sequence, 147 residues long: MSEILTKSRARNVFYGGSLFFIAVFVGLTVQSHNYVVSTTPALTDEVILGKHVWERNSCINCHTLHGEGAYFAPEVGNVMTRWGVLDDPDAAAEMLGGWMDAQPSGVEGRRQMPHFELTDEEKRGLSEFLRWADQMNTQSWPPNDAG.

A helical; Signal-anchor membrane pass occupies residues 13–29 (VFYGGSLFFIAVFVGLT). Heme c is bound by residues Cys59, Cys62, and His63.

In terms of assembly, heterodimer of cytochromes b (large subunit) and c (small subunit).

The protein resides in the cell membrane. In terms of biological role, component of the anaerobic respiratory chain that transforms nitrate to dinitrogen (denitrification). The sequence is that of Nitric oxide reductase subunit C (norC) from Cereibacter sphaeroides (strain ATCC 17025 / ATH 2.4.3) (Rhodobacter sphaeroides).